Consider the following 149-residue polypeptide: MADQLTEEQIAEFKEAFSLFDKDGNGNITTKELGTVMRSLGQNPTEGELQDMINEVDADGNGTIDFPEFLTMMARKMKDTDSEEEIREAFKVFDKDGNGFISAAELRHVMTNPGEKLTDEEVDEMIREADIDGDGQVNYEEFVKMMTSK.

The residue at position 2 (A2) is an N-acetylalanine. EF-hand domains lie at 8 to 43 (EQIA…LGQN), 44 to 79 (PTEG…KMKD), 81 to 116 (DSEE…PGEK), and 117 to 149 (LTDE…MTSK). D21, D23, N25, N27, E32, D57, D59, N61, T63, E68, D94, D96, N98, and E105 together coordinate Ca(2+). N6,N6,N6-trimethyllysine is present on K116. Ca(2+) is bound by residues D130, D132, D134, Q136, and E141.

It belongs to the calmodulin family.

Calmodulin mediates the control of a large number of enzymes, ion channels and other proteins by Ca(2+). Among the enzymes to be stimulated by the calmodulin-Ca(2+) complex are a number of protein kinases and phosphatases. The protein is Calmodulin-2 (CAM2) of Branchiostoma floridae (Florida lancelet).